The following is a 270-amino-acid chain: MATGTRYAGKVVVVTGGGRGIGAGIVRAFVNSGARVVICDKDESGGRALEQELPGAVFILCDVTQEDDVKTLVSETIRRFGRLDCVVNNAGHHPPPQRPEETSAQGFRQLLELNLLGTYTLTKLALPYLRKSQGNVINISSLVGAIGQAQAVPYVATKGAVTAMTKALALDESPYGVRVNCISPGNIWTPLWEELAALMPDPRATIREGMLAQPLGRMGQPAEVGAAAVFLASEANFCTGIELLVTGGAELGYGCKASRSTPVDAPDIPS.

R19, I21, D40, K41, D62, V63, N89, Y154, K158, I187, T189, and L191 together coordinate NAD(+). Residue Y154 is the Proton acceptor of the active site.

This sequence belongs to the short-chain dehydrogenases/reductases (SDR) family. As to quaternary structure, homotetramer. In terms of tissue distribution, highly expressed in brain, placenta, liver and kidney.

It localises to the cytoplasm. The catalysed reaction is L-fucose + NAD(+) = L-fucono-1,5-lactone + NADH + H(+). It catalyses the reaction D-arabinose + NAD(+) = D-arabinono-1,5-lactone + NADH + H(+). It carries out the reaction L-galactose + NAD(+) = L-galactono-1,5-lactone + NADH + H(+). It participates in carbohydrate degradation; L-fucose degradation. Functionally, catalyzes the NAD(+)-dependent oxidation of L-fucose, yielding L-fucono-1,5-lactone, which rapidly converts spontaneously to L-fucone-1,4-lactone. Can also act on D-arabinose and L-galactose, with lower catalytic efficiency. Does not use NADPH. May be the initial enzyme of the L-fucose degradation pathway in mammals. This Homo sapiens (Human) protein is L-fucose dehydrogenase.